Here is a 713-residue protein sequence, read N- to C-terminus: Metal transporter CNNM3 (713 aa).

The chain crosses the membrane as a helical span at residues A7–A29. N-linked (GlcNAc...) asparagine glycosylation occurs at N73. In terms of domain architecture, CNNM transmembrane spans E136 to V314. Helical transmembrane passes span A137–A157, C199–L219, A227–A247, and L267–A287. CBS domains lie at L324 to L385 and Y392 to E458. Residues L664 to V713 form a disordered region. Residues S667 and S706 each carry the phosphoserine modification.

The protein belongs to the ACDP family. As to expression, widely expressed with highest levels in brain, kidney, liver, lung and heart.

The protein localises to the cell membrane. Probable metal transporter. The protein is Metal transporter CNNM3 (Cnnm3) of Mus musculus (Mouse).